The following is a 262-amino-acid chain: Tryptophan synthase alpha chain (262 aa).

Catalysis depends on proton acceptor residues glutamate 49 and aspartate 60.

Belongs to the TrpA family. As to quaternary structure, tetramer of two alpha and two beta chains.

It catalyses the reaction (1S,2R)-1-C-(indol-3-yl)glycerol 3-phosphate + L-serine = D-glyceraldehyde 3-phosphate + L-tryptophan + H2O. Its pathway is amino-acid biosynthesis; L-tryptophan biosynthesis; L-tryptophan from chorismate: step 5/5. Its function is as follows. The alpha subunit is responsible for the aldol cleavage of indoleglycerol phosphate to indole and glyceraldehyde 3-phosphate. This Thermoanaerobacter pseudethanolicus (strain ATCC 33223 / 39E) (Clostridium thermohydrosulfuricum) protein is Tryptophan synthase alpha chain.